A 72-amino-acid polypeptide reads, in one-letter code: Putative membrane protein insertion efficiency factor (72 aa).

This sequence belongs to the UPF0161 family.

It is found in the cell inner membrane. Its function is as follows. Could be involved in insertion of integral membrane proteins into the membrane. In Amoebophilus asiaticus (strain 5a2), this protein is Putative membrane protein insertion efficiency factor.